Consider the following 727-residue polypeptide: Engulfment and cell motility protein 1 (727 aa).

Phosphotyrosine; by HCK is present on Y18. K100 and K105 each carry N6-acetyllysine. Y216 carries the phosphotyrosine; by HCK modification. The ELMO domain occupies 319-492 (AQRDIIFELR…VVKEQVMRAL (174 aa)). S344 bears the Phosphoserine mark. Residues Y395 and Y511 each carry the phosphotyrosine; by HCK modification. The 122-residue stretch at 555 to 676 (RLVEGTCFRK…DGLNALLGKD (122 aa)) folds into the PH domain. Positions 707–714 (PDAPPPIP) match the SH3-binding motif. Y720 is modified (phosphotyrosine; by HCK).

Interacts with ADGRB1. Interacts directly with the SH3-domain of DOCK1 via its SH3-binding site. Part of a complex with DOCK1 and RAC1. Part of a complex with DOCK1 and CRK isoform CRK-II. Interacts with PLEKHG6. Interacts with HCK (via SH3 domain). Interacts with ADGRB3. Interacts with DOCK5. In terms of processing, phosphorylated by HCK. As to expression, widely expressed, with a higher expression in the spleen and placenta.

It localises to the cytoplasm. The protein resides in the cell membrane. In terms of biological role, involved in cytoskeletal rearrangements required for phagocytosis of apoptotic cells and cell motility. Acts in association with DOCK1 and CRK. Was initially proposed to be required in complex with DOCK1 to activate Rac Rho small GTPases. May enhance the guanine nucleotide exchange factor (GEF) activity of DOCK1. The sequence is that of Engulfment and cell motility protein 1 (ELMO1) from Homo sapiens (Human).